A 195-amino-acid polypeptide reads, in one-letter code: Molybdenum cofactor guanylyltransferase (195 aa).

Residues 10–12 (LAG), lysine 23, asparagine 51, aspartate 69, and aspartate 99 each bind GTP. Position 99 (aspartate 99) interacts with Mg(2+).

The protein belongs to the MobA family. As to quaternary structure, monomer. The cofactor is Mg(2+).

Its subcellular location is the cytoplasm. It catalyses the reaction Mo-molybdopterin + GTP + H(+) = Mo-molybdopterin guanine dinucleotide + diphosphate. Its function is as follows. Transfers a GMP moiety from GTP to Mo-molybdopterin (Mo-MPT) cofactor (Moco or molybdenum cofactor) to form Mo-molybdopterin guanine dinucleotide (Mo-MGD) cofactor. In Yersinia pestis bv. Antiqua (strain Antiqua), this protein is Molybdenum cofactor guanylyltransferase.